The sequence spans 150 residues: Ribosome-binding factor A (150 aa).

Residues 119–150 are disordered; that stretch reads VAERAKSAQPAGEPDPYRFDGAAAADDDEPAT.

Belongs to the RbfA family. In terms of assembly, monomer. Binds 30S ribosomal subunits, but not 50S ribosomal subunits or 70S ribosomes.

It is found in the cytoplasm. One of several proteins that assist in the late maturation steps of the functional core of the 30S ribosomal subunit. Associates with free 30S ribosomal subunits (but not with 30S subunits that are part of 70S ribosomes or polysomes). Required for efficient processing of 16S rRNA. May interact with the 5'-terminal helix region of 16S rRNA. The protein is Ribosome-binding factor A of Acidothermus cellulolyticus (strain ATCC 43068 / DSM 8971 / 11B).